The following is a 92-amino-acid chain: Evasin P675 (92 aa).

An N-terminal signal peptide occupies residues 1 to 24 (MEVKTFAFLQIAVIIALGLHLAPA). Intrachain disulfides connect cysteine 44–cysteine 63, cysteine 48–cysteine 65, and cysteine 59–cysteine 76. The N-linked (GlcNAc...) asparagine glycan is linked to asparagine 47. Residue asparagine 70 is glycosylated (N-linked (GlcNAc...) asparagine).

It localises to the secreted. Salivary chemokine-binding protein which binds to host chemokines CXCL1, CXCL2, CXCL3, CXCL4, CXCL5, CXCL6, CXCL10, CXCL11 and CXCL13. The protein is Evasin P675 of Ixodes ricinus (Common tick).